Here is a 363-residue protein sequence, read N- to C-terminus: Anhydro-N-acetylmuramic acid kinase (363 aa).

10–17 (GTSLDGLD) provides a ligand contact to ATP.

The protein belongs to the anhydro-N-acetylmuramic acid kinase family.

It catalyses the reaction 1,6-anhydro-N-acetyl-beta-muramate + ATP + H2O = N-acetyl-D-muramate 6-phosphate + ADP + H(+). It participates in amino-sugar metabolism; 1,6-anhydro-N-acetylmuramate degradation. The protein operates within cell wall biogenesis; peptidoglycan recycling. Catalyzes the specific phosphorylation of 1,6-anhydro-N-acetylmuramic acid (anhMurNAc) with the simultaneous cleavage of the 1,6-anhydro ring, generating MurNAc-6-P. Is required for the utilization of anhMurNAc either imported from the medium or derived from its own cell wall murein, and thus plays a role in cell wall recycling. This is Anhydro-N-acetylmuramic acid kinase from Pseudomonas fluorescens (strain Pf0-1).